Reading from the N-terminus, the 370-residue chain is Flagellar P-ring protein 1 (370 aa).

A signal peptide spans 1–25 (MSVLIKTRHCFVLLGLWLVLPTASA).

This sequence belongs to the FlgI family. The basal body constitutes a major portion of the flagellar organelle and consists of four rings (L,P,S, and M) mounted on a central rod.

It localises to the periplasm. It is found in the bacterial flagellum basal body. In terms of biological role, assembles around the rod to form the L-ring and probably protects the motor/basal body from shearing forces during rotation. In Yersinia pestis, this protein is Flagellar P-ring protein 1.